We begin with the raw amino-acid sequence, 881 residues long: Alanine--tRNA ligase (881 aa).

Residues His566, His570, Cys668, and His672 each contribute to the Zn(2+) site.

It belongs to the class-II aminoacyl-tRNA synthetase family. It depends on Zn(2+) as a cofactor.

It localises to the cytoplasm. The enzyme catalyses tRNA(Ala) + L-alanine + ATP = L-alanyl-tRNA(Ala) + AMP + diphosphate. In terms of biological role, catalyzes the attachment of alanine to tRNA(Ala) in a two-step reaction: alanine is first activated by ATP to form Ala-AMP and then transferred to the acceptor end of tRNA(Ala). Also edits incorrectly charged Ser-tRNA(Ala) and Gly-tRNA(Ala) via its editing domain. The sequence is that of Alanine--tRNA ligase from Frankia casuarinae (strain DSM 45818 / CECT 9043 / HFP020203 / CcI3).